A 107-amino-acid chain; its full sequence is DNA polymerase delta subunit 4 (107 aa).

Residues 1–16 (MGRKRLITDSYPVVKR) carry the PCNA-interaction protein motif (PIP box) motif. Positions 1 to 44 (MGRKRLITDSYPVVKRREGPAGHSKGELAPELGEEPQPRDEEEA) are disordered. The segment covering 15–28 (KRREGPAGHSKGEL) has biased composition (basic and acidic residues).

Belongs to the DNA polymerase delta subunit 4 family. In terms of assembly, component of the tetrameric DNA polymerase delta complex (Pol-delta4), which consists of POLD1/p125, POLD2/p50, POLD3/p66/p68 and POLD4/p12, with POLD1 bearing DNA polymerase and 3' to 5' proofreading exonuclease activities. Within this complex, directly interacts with POLD1 and POLD2. Directly interacts with PCNA, as do POLD1 and POLD3; this interaction stimulates Pol-delta4 polymerase activity. As POLD1 and POLD2, directly interacts with WRNIP1; this interaction stimulates DNA polymerase delta-mediated DNA synthesis, independently of the presence of PCNA. This stimulation may be due predominantly to an increase of initiation frequency and also to increased processivity. Upon genotoxic stress induced by DNA damaging agents or by replication stress, POLD4 is proteolytically degraded and Pol-delta4 is converted into a trimeric form of the complex (Pol-delta3) which has an increased proofreading activity. The DNA polymerase delta complex interacts with POLDIP2; this interaction is probably mediated through direct binding to POLD2. In terms of processing, ubiquitinated; undergoes 'Lys-48'-linked ubiquitination in response to UV irradiation, leading to proteasomal degradation. This modification is partly mediated by RNF8 and by the DCX(DTL) E3 ubiquitin ligase complex (also called CRL4(CDT2)). Efficient degradation requires the presence of PCNA and is required for the inhibition of fork progression after DNA damage.

It localises to the nucleus. Its function is as follows. As a component of the tetrameric DNA polymerase delta complex (Pol-delta4), plays a role in high fidelity genome replication and repair. Within this complex, increases the rate of DNA synthesis and decreases fidelity by regulating POLD1 polymerase and proofreading 3' to 5' exonuclease activity. Pol-delta4 participates in Okazaki fragment processing, through both the short flap pathway, as well as a nick translation system. Under conditions of DNA replication stress, required for the repair of broken replication forks through break-induced replication (BIR), a mechanism that may induce segmental genomic duplications of up to 200 kb. Involved in Pol-delta4 translesion synthesis (TLS) of templates carrying O6-methylguanine or abasic sites. Its degradation in response to DNA damage is required for the inhibition of fork progression and cell survival. This chain is DNA polymerase delta subunit 4 (POLD4), found in Homo sapiens (Human).